The following is a 146-amino-acid chain: Large ribosomal subunit protein uL15 (146 aa).

Basic and acidic residues predominate over residues 1–10 (MTLKLHDLRP). Positions 1–41 (MTLKLHDLRPARGSKIARTRVGRGDGSKGKTAGRGTKGTRA) are disordered.

The protein belongs to the universal ribosomal protein uL15 family. Part of the 50S ribosomal subunit.

Its function is as follows. Binds to the 23S rRNA. In Mycobacterium tuberculosis (strain ATCC 25177 / H37Ra), this protein is Large ribosomal subunit protein uL15.